We begin with the raw amino-acid sequence, 293 residues long: Ribosomal protein L11 methyltransferase (293 aa).

4 residues coordinate S-adenosyl-L-methionine: Thr145, Gly166, Asp188, and Asn230.

Belongs to the methyltransferase superfamily. PrmA family.

It is found in the cytoplasm. It catalyses the reaction L-lysyl-[protein] + 3 S-adenosyl-L-methionine = N(6),N(6),N(6)-trimethyl-L-lysyl-[protein] + 3 S-adenosyl-L-homocysteine + 3 H(+). In terms of biological role, methylates ribosomal protein L11. The sequence is that of Ribosomal protein L11 methyltransferase from Salmonella dublin (strain CT_02021853).